Reading from the N-terminus, the 252-residue chain is 5-oxoprolinase subunit A (252 aa).

Belongs to the LamB/PxpA family. In terms of assembly, forms a complex composed of PxpA, PxpB and PxpC.

It carries out the reaction 5-oxo-L-proline + ATP + 2 H2O = L-glutamate + ADP + phosphate + H(+). Functionally, catalyzes the cleavage of 5-oxoproline to form L-glutamate coupled to the hydrolysis of ATP to ADP and inorganic phosphate. This Bacillus cytotoxicus (strain DSM 22905 / CIP 110041 / 391-98 / NVH 391-98) protein is 5-oxoprolinase subunit A.